The primary structure comprises 138 residues: Vesicle transport protein GOT1B (138 aa).

Methionine 1 is modified (N-acetylmethionine). The Cytoplasmic portion of the chain corresponds to 1–9; it reads MISLTDTQK. Residues 10-30 form a helical membrane-spanning segment; that stretch reads IGMGLTGFGVFFLFFGMILFF. Residues 31 to 32 lie on the Lumenal side of the membrane; the sequence is DK. A helical membrane pass occupies residues 33–53; the sequence is ALLAIGNVLFVAGLAFVIGLE. Residues 54–68 lie on the Cytoplasmic side of the membrane; the sequence is RTFRFFFQRHKVKAT. Glutamate 90 is a topological domain (lumenal). A helical membrane pass occupies residues 91 to 109; it reads IYGFFLLFRGFFPVVVGFI. At 110–138 the chain is on the cytoplasmic side; that stretch reads RRVPVLGSLLNLPGIRSFVDKVGESNNMV.

The protein belongs to the GOT1 family.

The protein localises to the golgi apparatus membrane. May be involved in fusion of ER-derived transport vesicles with the Golgi complex. This chain is Vesicle transport protein GOT1B (Golt1b), found in Mus musculus (Mouse).